The chain runs to 584 residues: Probable terpene synthase 9 (584 aa).

Residues Asp339, Asp343, and Glu491 each coordinate Mg(2+). Residues 339–343 carry the DDXXD motif motif; the sequence is DDMYD.

It belongs to the terpene synthase family. Mg(2+) is required as a cofactor.

Probable sesquiterpene synthase. The chain is Probable terpene synthase 9 (TPS9) from Ricinus communis (Castor bean).